Reading from the N-terminus, the 460-residue chain is MENVAAIILAAGKGTRMKSGLVKVLHPIAGRPMIDWPLEAARGAGAAPVVLVVGHQAEAVRERFQGAGDIACALQAEQLGTGHAVACAAPALAGFSGTVLILCGDTPLLRGGTLTDLLAFHRSQGAAVTVLTARMENPHGYGRVLRDEAGRVLRIVEQKDASPQECSVREINSGIYCMEAGFLFDNIGSLGNDNAQNEFYLTDLVAMAAQKGATCLAMAIEDSDEIMGVNDRAQLAQAARILRRRINRDLMLSGVSLVDPEQTYIDQGVVIGPDTLIHPNCSISGPTQIGNGCQIESGVSISSCRIGDRCRIKAGSVLEDSELRADVAVGPMAHLRPGTVLNDHVKIGNFVETKKTVMGEGSKASHLTYLGDAEIGRDVNIGCGTITCNYDGVKKHRTLIGDNVFVGSDVQLVAPVRVGADSLIAAGTTVTRDVPAGSLAISRTPQVNREGWRIRMKKKT.

Positions 1 to 232 are pyrophosphorylase; that stretch reads MENVAAIILA…SDEIMGVNDR (232 aa). UDP-N-acetyl-alpha-D-glucosamine contacts are provided by residues 9–12, Lys23, Gln75, and 80–81; these read LAAG and GT. Asp105 is a Mg(2+) binding site. Residues Gly142, Glu157, Asn172, and Asn230 each contribute to the UDP-N-acetyl-alpha-D-glucosamine site. Position 230 (Asn230) interacts with Mg(2+). Residues 233-253 form a linker region; sequence AQLAQAARILRRRINRDLMLS. The segment at 254–460 is N-acetyltransferase; sequence GVSLVDPEQT…GWRIRMKKKT (207 aa). Residues Arg336 and Lys354 each contribute to the UDP-N-acetyl-alpha-D-glucosamine site. The Proton acceptor role is filled by His366. UDP-N-acetyl-alpha-D-glucosamine-binding residues include Tyr369 and Asn380. Residues 389 to 390, Ser408, Ala426, and Arg443 contribute to the acetyl-CoA site; that span reads NY.

In the N-terminal section; belongs to the N-acetylglucosamine-1-phosphate uridyltransferase family. It in the C-terminal section; belongs to the transferase hexapeptide repeat family. As to quaternary structure, homotrimer. It depends on Mg(2+) as a cofactor.

The protein localises to the cytoplasm. It carries out the reaction alpha-D-glucosamine 1-phosphate + acetyl-CoA = N-acetyl-alpha-D-glucosamine 1-phosphate + CoA + H(+). The catalysed reaction is N-acetyl-alpha-D-glucosamine 1-phosphate + UTP + H(+) = UDP-N-acetyl-alpha-D-glucosamine + diphosphate. The protein operates within nucleotide-sugar biosynthesis; UDP-N-acetyl-alpha-D-glucosamine biosynthesis; N-acetyl-alpha-D-glucosamine 1-phosphate from alpha-D-glucosamine 6-phosphate (route II): step 2/2. Its pathway is nucleotide-sugar biosynthesis; UDP-N-acetyl-alpha-D-glucosamine biosynthesis; UDP-N-acetyl-alpha-D-glucosamine from N-acetyl-alpha-D-glucosamine 1-phosphate: step 1/1. It functions in the pathway bacterial outer membrane biogenesis; LPS lipid A biosynthesis. Its function is as follows. Catalyzes the last two sequential reactions in the de novo biosynthetic pathway for UDP-N-acetylglucosamine (UDP-GlcNAc). The C-terminal domain catalyzes the transfer of acetyl group from acetyl coenzyme A to glucosamine-1-phosphate (GlcN-1-P) to produce N-acetylglucosamine-1-phosphate (GlcNAc-1-P), which is converted into UDP-GlcNAc by the transfer of uridine 5-monophosphate (from uridine 5-triphosphate), a reaction catalyzed by the N-terminal domain. The sequence is that of Bifunctional protein GlmU from Pelobacter propionicus (strain DSM 2379 / NBRC 103807 / OttBd1).